Reading from the N-terminus, the 725-residue chain is Ribonuclease R (725 aa).

An RNB domain is found at 236–559 (RKDLRDKLII…QLHRLIKQMV (324 aa)). Positions 611–689 (GKSLKAQIVS…NLGKVDVVLE (79 aa)) constitute an S1 motif domain.

It belongs to the RNR ribonuclease family. RNase R subfamily.

The protein resides in the cytoplasm. It carries out the reaction Exonucleolytic cleavage in the 3'- to 5'-direction to yield nucleoside 5'-phosphates.. Functionally, 3'-5' exoribonuclease that releases 5'-nucleoside monophosphates and is involved in maturation of structured RNAs. The protein is Ribonuclease R of Mycoplasmopsis pulmonis (strain UAB CTIP) (Mycoplasma pulmonis).